Reading from the N-terminus, the 66-residue chain is Protein translocase subunit SecE (66 aa).

A helical membrane pass occupies residues 29–49; sequence LIASTLVVVAAVFIFSLICLV.

The protein belongs to the SecE/SEC61-gamma family. As to quaternary structure, component of the Sec protein translocase complex. Heterotrimer consisting of SecY, SecE and SecG subunits. The heterotrimers can form oligomers, although 1 heterotrimer is thought to be able to translocate proteins. Interacts with the ribosome. Interacts with SecDF, and other proteins may be involved. Interacts with SecA.

Its subcellular location is the cell inner membrane. Functionally, essential subunit of the Sec protein translocation channel SecYEG. Clamps together the 2 halves of SecY. May contact the channel plug during translocation. The protein is Protein translocase subunit SecE of Rickettsia typhi (strain ATCC VR-144 / Wilmington).